The following is a 206-amino-acid chain: GTP cyclohydrolase 1 (206 aa).

Positions 95, 98, and 166 each coordinate Zn(2+).

The protein belongs to the GTP cyclohydrolase I family. In terms of assembly, toroid-shaped homodecamer, composed of two pentamers of five dimers.

The catalysed reaction is GTP + H2O = 7,8-dihydroneopterin 3'-triphosphate + formate + H(+). The protein operates within cofactor biosynthesis; 7,8-dihydroneopterin triphosphate biosynthesis; 7,8-dihydroneopterin triphosphate from GTP: step 1/1. The sequence is that of GTP cyclohydrolase 1 from Bartonella henselae (strain ATCC 49882 / DSM 28221 / CCUG 30454 / Houston 1) (Rochalimaea henselae).